Consider the following 968-residue polypeptide: Protein translocase subunit SecA (968 aa).

ATP contacts are provided by residues glutamine 86, 104–108, and aspartate 494; that span reads GEGKT. The disordered stretch occupies residues 835 to 968; it reads PAESAEESTD…RAAKAAKKRR (134 aa). Low complexity-rich tracts occupy residues 883-892 and 910-923; these read ARVATRPAAE and SAPS…FSEG. The span at 956–968 shows a compositional bias: basic residues; that stretch reads ARRRAAKAAKKRR.

Belongs to the SecA family. As to quaternary structure, monomer and homodimer. Part of the essential Sec protein translocation apparatus which comprises SecA, SecYEG and auxiliary proteins SecDF. Other proteins may also be involved.

It localises to the cell membrane. Its subcellular location is the cytoplasm. The enzyme catalyses ATP + H2O + cellular proteinSide 1 = ADP + phosphate + cellular proteinSide 2.. Its function is as follows. Part of the Sec protein translocase complex. Interacts with the SecYEG preprotein conducting channel. Has a central role in coupling the hydrolysis of ATP to the transfer of proteins into and across the cell membrane, serving as an ATP-driven molecular motor driving the stepwise translocation of polypeptide chains across the membrane. This is Protein translocase subunit SecA from Beutenbergia cavernae (strain ATCC BAA-8 / DSM 12333 / CCUG 43141 / JCM 11478 / NBRC 16432 / NCIMB 13614 / HKI 0122).